Consider the following 278-residue polypeptide: Pantothenate synthetase (278 aa).

ATP is bound at residue 27–34; the sequence is MGNLHEGH. Histidine 34 serves as the catalytic Proton donor. (R)-pantoate is bound at residue glutamine 58. Glutamine 58 contacts beta-alanine. 147-150 is a binding site for ATP; sequence GEKD. Residue glutamine 153 participates in (R)-pantoate binding. An ATP-binding site is contributed by 184–187; sequence YSSR.

The protein belongs to the pantothenate synthetase family. Homodimer.

Its subcellular location is the cytoplasm. The catalysed reaction is (R)-pantoate + beta-alanine + ATP = (R)-pantothenate + AMP + diphosphate + H(+). The protein operates within cofactor biosynthesis; (R)-pantothenate biosynthesis; (R)-pantothenate from (R)-pantoate and beta-alanine: step 1/1. In terms of biological role, catalyzes the condensation of pantoate with beta-alanine in an ATP-dependent reaction via a pantoyl-adenylate intermediate. This is Pantothenate synthetase from Acidithiobacillus ferrooxidans (strain ATCC 23270 / DSM 14882 / CIP 104768 / NCIMB 8455) (Ferrobacillus ferrooxidans (strain ATCC 23270)).